Here is a 382-residue protein sequence, read N- to C-terminus: Chaperone protein DnaJ (382 aa).

A J domain is found at 6–70; the sequence is DYYEILGLPK…EKRAQYDRFG (65 aa). The CR-type zinc-finger motif lies at 131–213; it reads GVRKDIDIPR…CGGAGRVRNK (83 aa). Cys-144, Cys-147, Cys-161, Cys-164, Cys-187, Cys-190, Cys-201, and Cys-204 together coordinate Zn(2+). CXXCXGXG motif repeat units lie at residues 144-151, 161-168, 187-194, and 201-208; these read CSTCSGTG, CPTCGGTG, CSTCHGRG, and CPVCGGAG. Residues 146 to 168 are disordered; the sequence is TCSGTGAKPGTSPKRCPTCGGTG. The tract at residues 348–382 is disordered; that stretch reads FENLSKGKKPQEEEKSKAEKHKKGIFEKVKDAFES. Basic and acidic residues predominate over residues 371-382; sequence GIFEKVKDAFES.

Belongs to the DnaJ family. Homodimer. Requires Zn(2+) as cofactor.

It localises to the cytoplasm. Its function is as follows. Participates actively in the response to hyperosmotic and heat shock by preventing the aggregation of stress-denatured proteins and by disaggregating proteins, also in an autonomous, DnaK-independent fashion. Unfolded proteins bind initially to DnaJ; upon interaction with the DnaJ-bound protein, DnaK hydrolyzes its bound ATP, resulting in the formation of a stable complex. GrpE releases ADP from DnaK; ATP binding to DnaK triggers the release of the substrate protein, thus completing the reaction cycle. Several rounds of ATP-dependent interactions between DnaJ, DnaK and GrpE are required for fully efficient folding. Also involved, together with DnaK and GrpE, in the DNA replication of plasmids through activation of initiation proteins. The sequence is that of Chaperone protein DnaJ from Methanosarcina acetivorans (strain ATCC 35395 / DSM 2834 / JCM 12185 / C2A).